The following is a 227-amino-acid chain: UPF0173 metal-dependent hydrolase BPUM_2573 (227 aa).

The protein belongs to the UPF0173 family.

In Bacillus pumilus (strain SAFR-032), this protein is UPF0173 metal-dependent hydrolase BPUM_2573.